A 329-amino-acid polypeptide reads, in one-letter code: Peroxidase 58 (329 aa).

Residues 1–23 form the signal peptide; sequence MGLSKTIPLVLLPILMFGVLSNA. Intrachain disulfides connect Cys-34/Cys-116, Cys-67/Cys-72, Cys-122/Cys-325, and Cys-201/Cys-234. N-linked (GlcNAc...) asparagine glycosylation is present at Asn-36. His-65 acts as the Proton acceptor in catalysis. Ca(2+) is bound by residues Asp-66, Val-69, Gly-71, Asp-73, and Ser-75. Residue Pro-164 participates in substrate binding. His-194 lines the heme b pocket. Residue Thr-195 participates in Ca(2+) binding. N-linked (GlcNAc...) asparagine glycosylation is present at Asn-210. 3 residues coordinate Ca(2+): Asp-247, Ser-250, and Asp-255.

The protein belongs to the peroxidase family. Classical plant (class III) peroxidase subfamily. Requires heme b as cofactor. The cofactor is Ca(2+).

Its subcellular location is the secreted. It carries out the reaction 2 a phenolic donor + H2O2 = 2 a phenolic radical donor + 2 H2O. Its function is as follows. Removal of H(2)O(2), oxidation of toxic reductants, biosynthesis and degradation of lignin, suberization, auxin catabolism, response to environmental stresses such as wounding, pathogen attack and oxidative stress. These functions might be dependent on each isozyme/isoform in each plant tissue. The protein is Peroxidase 58 (PER58) of Arabidopsis thaliana (Mouse-ear cress).